A 156-amino-acid chain; its full sequence is UPF0756 membrane protein Exig_2210 (156 aa).

A run of 5 helical transmembrane segments spans residues 5-25 (LFLI…LIIA), 52-72 (WGVT…DIGF), 83-103 (IGII…HGVG), 109-129 (PLVT…FRGV), and 131-151 (VGPL…DIIV).

It belongs to the UPF0756 family.

It localises to the cell membrane. The polypeptide is UPF0756 membrane protein Exig_2210 (Exiguobacterium sibiricum (strain DSM 17290 / CCUG 55495 / CIP 109462 / JCM 13490 / 255-15)).